The following is a 339-amino-acid chain: Glycerol-3-phosphate dehydrogenase [NAD(P)+] (339 aa).

Positions 15, 16, 36, and 110 each coordinate NADPH. Residues lysine 110, glycine 139, and threonine 141 each contribute to the sn-glycerol 3-phosphate site. NADPH is bound at residue alanine 143. Sn-glycerol 3-phosphate-binding residues include lysine 195, aspartate 248, serine 258, arginine 259, and asparagine 260. Lysine 195 (proton acceptor) is an active-site residue. NADPH is bound at residue arginine 259. NADPH contacts are provided by valine 283 and glutamate 285.

It belongs to the NAD-dependent glycerol-3-phosphate dehydrogenase family.

The protein localises to the cytoplasm. It catalyses the reaction sn-glycerol 3-phosphate + NAD(+) = dihydroxyacetone phosphate + NADH + H(+). It carries out the reaction sn-glycerol 3-phosphate + NADP(+) = dihydroxyacetone phosphate + NADPH + H(+). It functions in the pathway membrane lipid metabolism; glycerophospholipid metabolism. Catalyzes the reduction of the glycolytic intermediate dihydroxyacetone phosphate (DHAP) to sn-glycerol 3-phosphate (G3P), the key precursor for phospholipid synthesis. This chain is Glycerol-3-phosphate dehydrogenase [NAD(P)+], found in Cronobacter sakazakii (strain ATCC BAA-894) (Enterobacter sakazakii).